Consider the following 182-residue polypeptide: Keratin, type II cytoskeletal 68 kDa, component IA (182 aa).

The IF rod domain maps to 1–66 (DAEQHGEVAL…TLLEGEECRM (66 aa)). The coil 2B stretch occupies residues 1–66 (DAEQHGEVAL…TLLEGEECRM (66 aa)). The interval 67–86 (SGECQSSVSIEMVHNTTSSS) is H2 subdomain. Residues 67–182 (SGECQSSVSI…SQSQRSHHKL (116 aa)) are tail. The segment at 87–162 (SGGSGALGGG…GSCAVSGVGG (76 aa)) is V2 subdomain. A compositionally biased stretch (gly residues) spans 104 to 124 (GSGGLGSGSLGSGRLGSGGRG). The segment at 104-182 (GSGGLGSGSL…SQSQRSHHKL (79 aa)) is disordered. Low complexity-rich tracts occupy residues 144–158 (VRGS…CAVS) and 165–176 (SVRVTQSSSQSQ). Residues 163 to 182 (RGSVRVTQSSSQSQRSHHKL) form an E2 subdomain region.

Belongs to the intermediate filament family. As to quaternary structure, heterotetramer of two type I and two type II keratins.

The chain is Keratin, type II cytoskeletal 68 kDa, component IA from Bos taurus (Bovine).